The sequence spans 177 residues: Hypoxanthine phosphoribosyltransferase (177 aa).

The diphosphate site is built by R43 and G44. E99 contacts GMP. Position 99 (E99) interacts with IMP. The Mg(2+) site is built by E99 and D100. Catalysis depends on D103, which acts as the Proton acceptor. GMP is bound by residues 103-108 (DSGKTL), K131, and D159. Residues 103-108 (DSGKTL) and K131 contribute to the IMP site. R165 contacts diphosphate.

It belongs to the purine/pyrimidine phosphoribosyltransferase family. As to quaternary structure, homotetramer. It depends on Mg(2+) as a cofactor.

It localises to the cytoplasm. It carries out the reaction IMP + diphosphate = hypoxanthine + 5-phospho-alpha-D-ribose 1-diphosphate. The catalysed reaction is GMP + diphosphate = guanine + 5-phospho-alpha-D-ribose 1-diphosphate. It participates in purine metabolism; IMP biosynthesis via salvage pathway; IMP from hypoxanthine: step 1/1. Functionally, purine salvage pathway enzyme which catalyzes the transfer of the ribosyl-5-phosphate group from 5-phospho-alpha-D-ribose 1-diphosphate (PRPP) to the N9 position of hypoxanthine to yield IMP (inosine 5'-monophosphate). To a lesser extent, can also act on guanine leading to GMP, but shows a highly less efficient activity with xanthine. The chain is Hypoxanthine phosphoribosyltransferase (hpt) from Buchnera aphidicola subsp. Schizaphis graminum (strain Sg).